Consider the following 72-residue polypeptide: Crustacean hyperglycemic hormone (72 aa).

The residue at position 1 (Q1) is a Pyrrolidone carboxylic acid; partial. 3 disulfides stabilise this stretch: C7–C43, C23–C39, and C26–C52. V72 is modified (valine amide).

It belongs to the arthropod CHH/MIH/GIH/VIH hormone family. The N-terminus forms pyrrolidone carboxylic acid in isoform CHH-II and is free in isoform CHH-I. In terms of tissue distribution, produced by the medulla terminalis X-organ in the eyestalks and transported to the sinus gland where they are stored and released.

It is found in the secreted. Hormone found in the sinus gland of isopods and decapods which controls the blood sugar level. Has a secretagogue action over the amylase released from the midgut gland. May act as a stress hormone and may be involved in the control of molting and reproduction. This is Crustacean hyperglycemic hormone from Cancer pagurus (Rock crab).